We begin with the raw amino-acid sequence, 872 residues long: Alanine--tRNA ligase (872 aa).

4 residues coordinate Zn(2+): His567, His571, Cys669, and His673.

This sequence belongs to the class-II aminoacyl-tRNA synthetase family. The cofactor is Zn(2+).

The protein localises to the cytoplasm. It catalyses the reaction tRNA(Ala) + L-alanine + ATP = L-alanyl-tRNA(Ala) + AMP + diphosphate. In terms of biological role, catalyzes the attachment of alanine to tRNA(Ala) in a two-step reaction: alanine is first activated by ATP to form Ala-AMP and then transferred to the acceptor end of tRNA(Ala). Also edits incorrectly charged Ser-tRNA(Ala) and Gly-tRNA(Ala) via its editing domain. In Streptococcus pyogenes serotype M5 (strain Manfredo), this protein is Alanine--tRNA ligase.